Reading from the N-terminus, the 381-residue chain is Protein-glutamate methylesterase/protein-glutamine glutaminase (381 aa).

The 118-residue stretch at 8–125 (QVLCIDDSAL…RDGMNEYADQ (118 aa)) folds into the Response regulatory domain. D59 carries the post-translational modification 4-aspartylphosphate. The region spanning 183–375 (FSSTEKLIIV…PHVLARLSAH (193 aa)) is the CheB-type methylesterase domain. Active-site residues include S195, H221, and D317.

Belongs to the CheB family. Phosphorylated by CheA. Phosphorylation of the N-terminal regulatory domain activates the methylesterase activity.

Its subcellular location is the cytoplasm. The catalysed reaction is [protein]-L-glutamate 5-O-methyl ester + H2O = L-glutamyl-[protein] + methanol + H(+). It catalyses the reaction L-glutaminyl-[protein] + H2O = L-glutamyl-[protein] + NH4(+). Functionally, involved in chemotaxis. Part of a chemotaxis signal transduction system that modulates chemotaxis in response to various stimuli. Catalyzes the demethylation of specific methylglutamate residues introduced into the chemoreceptors (methyl-accepting chemotaxis proteins or MCP) by CheR. Also mediates the irreversible deamidation of specific glutamine residues to glutamic acid. The sequence is that of Protein-glutamate methylesterase/protein-glutamine glutaminase from Ralstonia nicotianae (strain ATCC BAA-1114 / GMI1000) (Ralstonia solanacearum).